Consider the following 497-residue polypeptide: Guanosine-5'-triphosphate,3'-diphosphate pyrophosphatase (497 aa).

This sequence belongs to the GppA/Ppx family. GppA subfamily.

It carries out the reaction guanosine 3'-diphosphate 5'-triphosphate + H2O = guanosine 3',5'-bis(diphosphate) + phosphate + H(+). Its pathway is purine metabolism; ppGpp biosynthesis; ppGpp from GTP: step 2/2. In terms of biological role, catalyzes the conversion of pppGpp to ppGpp. Guanosine pentaphosphate (pppGpp) is a cytoplasmic signaling molecule which together with ppGpp controls the 'stringent response', an adaptive process that allows bacteria to respond to amino acid starvation, resulting in the coordinated regulation of numerous cellular activities. This is Guanosine-5'-triphosphate,3'-diphosphate pyrophosphatase from Vibrio campbellii (strain ATCC BAA-1116).